Reading from the N-terminus, the 585-residue chain is Serine protease HtrA-like (585 aa).

Residues 1–184 form a disordered region; that stretch reads MDNNKKQVIP…QPKDKDNDNT (184 aa). Positions 21–82 are enriched in basic and acidic residues; the sequence is YFHNVEREER…IHQQRDDKSY (62 aa). The segment covering 84 to 94 has biased composition (polar residues); it reads QKTLNQNNQMN. Over residues 95 to 113 the composition is skewed to basic and acidic residues; sequence KSKDDDNKIGEESLHDVRV. Polar residues predominate over residues 114-124; that stretch reads SSDTSTLPHQN. Residues 126–139 are compositionally biased toward basic and acidic residues; sequence SIKDYDDSGNESKQ. The segment covering 151 to 175 has biased composition (polar residues); that stretch reads GVNSNHTEQDSRSTQPYSSKHSYSQ. A helical transmembrane segment spans residues 224–244; sequence MLIIIGIIVLLLILNAIFTTV. Residues H320, D350, and S435 each act as charge relay system in the active site. In terms of domain architecture, PDZ spans 516 to 575; sequence GVLIGEVKENGLGDKAGLKKGDVIVELDGKKIEDNLRYRQVIYSHYDDQKTITAKIYRNG.

The protein belongs to the peptidase S1C family.

The protein localises to the cell membrane. The protein is Serine protease HtrA-like of Staphylococcus epidermidis (strain ATCC 35984 / DSM 28319 / BCRC 17069 / CCUG 31568 / BM 3577 / RP62A).